The primary structure comprises 217 residues: Lipoprotein CseA (217 aa).

The N-terminal stretch at 1 to 34 (MRGLGTESLRARGALKAAIAAVAGLAVLGLSVSA) is a signal peptide. Cys35 is lipidated: N-palmitoyl cysteine. Cys35 is lipidated: S-diacylglycerol cysteine. Disordered stretches follow at residues 39–66 (GTGARDEGPAGSDSVAAGAATPTVSPSK) and 192–217 (FSEESRTHTEYSNAVGGTDSATPAPN).

Its subcellular location is the cell membrane. Its function is as follows. May be involved in the stabilization of the cell envelope or may interact with the sensor protein CseC to modulate its activity, in response to cell envelope stress. The chain is Lipoprotein CseA (cseA) from Streptomyces avermitilis (strain ATCC 31267 / DSM 46492 / JCM 5070 / NBRC 14893 / NCIMB 12804 / NRRL 8165 / MA-4680).